We begin with the raw amino-acid sequence, 68 residues long: Copper transport protein ATOX1 (68 aa).

The HMA domain maps to 1 to 63; the sequence is MPKHEFSVDM…TLNKTGKAVS (63 aa). The Cu cation site is built by C12 and C15. A Phosphoserine modification is found at S47. The residue at position 60 (K60) is an N6-acetyllysine.

This sequence belongs to the ATX1 family. Homodimer. Interacts with ATP7B. Interacts with ATP7A. Interacts (via dimer form) with SLC31A1 (via C-terminal domain); this interaction improves ATOX1 stability and controls intracellular Cu(I) levels.

Binds and deliver cytosolic copper to the copper ATPase proteins. May be important in cellular antioxidant defense. This chain is Copper transport protein ATOX1, found in Rattus norvegicus (Rat).